The sequence spans 624 residues: LRR receptor kinase BAK1 (624 aa).

The first 25 residues, 1-25 (MAAHRWAVWAVLLLRLLVPAARVLA), serve as a signal peptide directing secretion. The Extracellular portion of the chain corresponds to 26–237 (NMEGDALHSL…QSPGSSSSTG (212 aa)). LRR repeat units follow at residues 91–115 (LKNL…LGNL), 117–139 (NLVS…LGNL), 140–163 (LKLR…LTAI), and 164–188 (TALQ…SFSL). N103, N114, N127, N149, and N175 each carry an N-linked (GlcNAc...) asparagine glycan. The disordered stretch occupies residues 205 to 236 (TTKPCPGAPPFSPPPPYNPPTPVQSPGSSSST). Residues 210–227 (PGAPPFSPPPPYNPPTPV) are compositionally biased toward pro residues. The chain crosses the membrane as a helical span at residues 238–258 (AIAGGVAAGAALLFAIPAIGF). Topologically, residues 259–624 (AWYRRRKPQE…LHAVELSGPR (366 aa)) are cytoplasmic. The Protein kinase domain occupies 301–588 (FSNKNILGRG…GLAERWEEWQ (288 aa)). Residues 307–315 (LGRGGFGKV) and K329 each bind ATP. Catalysis depends on D428, which acts as the Proton acceptor.

It belongs to the protein kinase superfamily. Ser/Thr protein kinase family. As to quaternary structure, forms homodimers. Interacts with BRI1. Interacts with REM4.1. In terms of tissue distribution, expressed in developing lateral roots, shoot apex, leaf blades, lamina joints and flowers. Expressed at low levels in leaf sheaths and panicles.

The protein resides in the cell membrane. It catalyses the reaction L-seryl-[protein] + ATP = O-phospho-L-seryl-[protein] + ADP + H(+). The enzyme catalyses L-threonyl-[protein] + ATP = O-phospho-L-threonyl-[protein] + ADP + H(+). In terms of biological role, LRR receptor kinase involved in defense response. Does not seem to be required specifically for XA21-mediated immunity or basal resistance to Xanthomonas oryzae pv. oryzae (Xoo), or immunity to Magnaporthe oryzae. Involved in brassinosteroid (BR) signaling pathway. Acts as a coreceptor of BRI1. Forms at the plasma membrane a receptor complex with BRI1 which is activated in response to brassinolide. Phosphorylates BRI1. Required for normal plant growth and leaf development. Possesses kinase activity in vitro. This is LRR receptor kinase BAK1 from Oryza sativa subsp. japonica (Rice).